The chain runs to 255 residues: Hemin import ATP-binding protein HmuV (255 aa).

The 237-residue stretch at 2 to 238 (LDVEGLHLKR…AALNAVFGID (237 aa)) folds into the ABC transporter domain. 34-41 (GPNGAGKS) serves as a coordination point for ATP.

It belongs to the ABC transporter superfamily. Heme (hemin) importer (TC 3.A.1.14.5) family. As to quaternary structure, the complex is composed of two ATP-binding proteins (HmuV), two transmembrane proteins (HmuU) and a solute-binding protein (HmuT).

It is found in the cell inner membrane. Its function is as follows. Part of the ABC transporter complex HmuTUV involved in hemin import. Responsible for energy coupling to the transport system. The sequence is that of Hemin import ATP-binding protein HmuV from Pseudomonas entomophila (strain L48).